A 238-amino-acid polypeptide reads, in one-letter code: RxLR effector protein PITG_14788 (238 aa).

The N-terminal stretch at 1–23 (MKSLHAVNLVLLLLLACFAPAPA) is a signal peptide. The RxLR-dEER signature appears at 47–65 (RLLRAHSSGKEEQKEEEER).

It belongs to the RxLR effector family.

It is found in the secreted. It localises to the host cytoplasm. Its subcellular location is the host cytoskeleton. The protein localises to the host nucleus. The protein resides in the host nucleolus. Its function is as follows. Effector that enhances P.infestans colonization of Nicotiana benthamiana leaves. The chain is RxLR effector protein PITG_14788 from Phytophthora infestans (strain T30-4) (Potato late blight agent).